The chain runs to 479 residues: Anaerobic nitric oxide reductase flavorubredoxin (479 aa).

Residues 30–210 (LRGSSYNSYL…PFSRLVTPKI (181 aa)) are zinc metallo-hydrolase. 6 residues coordinate Fe cation: histidine 79, glutamate 81, aspartate 83, histidine 147, aspartate 166, and histidine 227. A Flavodoxin-like domain is found at 254 to 393 (ITIFYDTMSN…LCRQHGRDIA (140 aa)). Residues 260 to 264 (TMSNN) and 342 to 369 (AFGS…EMSL) each bind FMN. Residues 423–474 (GPKMQCSVCQWIYDPALGEPLQDVAPGTPWSDVPDNFLCPECSLGKDVFDVL) form the Rubredoxin-like domain. Cysteine 428, cysteine 431, cysteine 461, and cysteine 464 together coordinate Fe cation.

It in the N-terminal section; belongs to the zinc metallo-hydrolase group 3 family. Homotetramer. Requires Fe cation as cofactor. FMN serves as cofactor.

It localises to the cytoplasm. It participates in nitrogen metabolism; nitric oxide reduction. Functionally, anaerobic nitric oxide reductase; uses NADH to detoxify nitric oxide (NO), protecting several 4Fe-4S NO-sensitive enzymes. Has at least 2 reductase partners, only one of which (NorW, flavorubredoxin reductase) has been identified. NO probably binds to the di-iron center; electrons enter from the NorW at rubredoxin and are transferred sequentially to the FMN center and the di-iron center. Also able to function as an aerobic oxygen reductase. This is Anaerobic nitric oxide reductase flavorubredoxin from Salmonella typhi.